We begin with the raw amino-acid sequence, 199 residues long: ATP-dependent Clp protease proteolytic subunit (199 aa).

Serine 102 serves as the catalytic Nucleophile. Residue histidine 127 is part of the active site.

This sequence belongs to the peptidase S14 family. Fourteen ClpP subunits assemble into 2 heptameric rings which stack back to back to give a disk-like structure with a central cavity, resembling the structure of eukaryotic proteasomes.

The protein resides in the cytoplasm. The enzyme catalyses Hydrolysis of proteins to small peptides in the presence of ATP and magnesium. alpha-casein is the usual test substrate. In the absence of ATP, only oligopeptides shorter than five residues are hydrolyzed (such as succinyl-Leu-Tyr-|-NHMec, and Leu-Tyr-Leu-|-Tyr-Trp, in which cleavage of the -Tyr-|-Leu- and -Tyr-|-Trp bonds also occurs).. Cleaves peptides in various proteins in a process that requires ATP hydrolysis. Has a chymotrypsin-like activity. Plays a major role in the degradation of misfolded proteins. The protein is ATP-dependent Clp protease proteolytic subunit of Pseudothermotoga lettingae (strain ATCC BAA-301 / DSM 14385 / NBRC 107922 / TMO) (Thermotoga lettingae).